A 335-amino-acid chain; its full sequence is Glyceraldehyde-3-phosphate dehydrogenase (335 aa).

Residues arginine 10–isoleucine 11, aspartate 31, arginine 75, and threonine 122 each bind NAD(+). Residues serine 152–threonine 154 and threonine 183 each bind D-glyceraldehyde 3-phosphate. Catalysis depends on cysteine 153, which acts as the Nucleophile. Asparagine 184 contacts NAD(+). Residues arginine 198, threonine 211 to glycine 212, and arginine 234 contribute to the D-glyceraldehyde 3-phosphate site. Asparagine 318 serves as a coordination point for NAD(+).

Belongs to the glyceraldehyde-3-phosphate dehydrogenase family. As to quaternary structure, homotetramer.

The protein localises to the cytoplasm. It catalyses the reaction D-glyceraldehyde 3-phosphate + phosphate + NAD(+) = (2R)-3-phospho-glyceroyl phosphate + NADH + H(+). Its pathway is carbohydrate degradation; glycolysis; pyruvate from D-glyceraldehyde 3-phosphate: step 1/5. Its function is as follows. Catalyzes the oxidative phosphorylation of glyceraldehyde 3-phosphate (G3P) to 1,3-bisphosphoglycerate (BPG) using the cofactor NAD. The first reaction step involves the formation of a hemiacetal intermediate between G3P and a cysteine residue, and this hemiacetal intermediate is then oxidized to a thioester, with concomitant reduction of NAD to NADH. The reduced NADH is then exchanged with the second NAD, and the thioester is attacked by a nucleophilic inorganic phosphate to produce BPG. This chain is Glyceraldehyde-3-phosphate dehydrogenase (gap), found in Borreliella burgdorferi (strain ATCC 35210 / DSM 4680 / CIP 102532 / B31) (Borrelia burgdorferi).